The sequence spans 219 residues: Thiamine-phosphate synthase (219 aa).

4-amino-2-methyl-5-(diphosphooxymethyl)pyrimidine-binding positions include 44–48 and Asn79; that span reads QFREK. Mg(2+) contacts are provided by Asp80 and Asp99. A 4-amino-2-methyl-5-(diphosphooxymethyl)pyrimidine-binding site is contributed by Ser117. 143–145 serves as a coordination point for 2-[(2R,5Z)-2-carboxy-4-methylthiazol-5(2H)-ylidene]ethyl phosphate; the sequence is TST. Residue Lys146 coordinates 4-amino-2-methyl-5-(diphosphooxymethyl)pyrimidine. 2-[(2R,5Z)-2-carboxy-4-methylthiazol-5(2H)-ylidene]ethyl phosphate-binding positions include Gly175 and 195–196; that span reads IS.

This sequence belongs to the thiamine-phosphate synthase family. Requires Mg(2+) as cofactor.

The enzyme catalyses 2-[(2R,5Z)-2-carboxy-4-methylthiazol-5(2H)-ylidene]ethyl phosphate + 4-amino-2-methyl-5-(diphosphooxymethyl)pyrimidine + 2 H(+) = thiamine phosphate + CO2 + diphosphate. It carries out the reaction 2-(2-carboxy-4-methylthiazol-5-yl)ethyl phosphate + 4-amino-2-methyl-5-(diphosphooxymethyl)pyrimidine + 2 H(+) = thiamine phosphate + CO2 + diphosphate. It catalyses the reaction 4-methyl-5-(2-phosphooxyethyl)-thiazole + 4-amino-2-methyl-5-(diphosphooxymethyl)pyrimidine + H(+) = thiamine phosphate + diphosphate. It functions in the pathway cofactor biosynthesis; thiamine diphosphate biosynthesis; thiamine phosphate from 4-amino-2-methyl-5-diphosphomethylpyrimidine and 4-methyl-5-(2-phosphoethyl)-thiazole: step 1/1. Condenses 4-methyl-5-(beta-hydroxyethyl)thiazole monophosphate (THZ-P) and 2-methyl-4-amino-5-hydroxymethyl pyrimidine pyrophosphate (HMP-PP) to form thiamine monophosphate (TMP). In Bacillus cereus (strain AH820), this protein is Thiamine-phosphate synthase.